The primary structure comprises 131 residues: Large ribosomal subunit protein bL17 (131 aa).

Belongs to the bacterial ribosomal protein bL17 family. In terms of assembly, part of the 50S ribosomal subunit. Contacts protein L32.

The protein is Large ribosomal subunit protein bL17 of Polynucleobacter necessarius subsp. necessarius (strain STIR1).